The following is a 423-amino-acid chain: Transducer protein Htr13 (423 aa).

Polar residues predominate over residues M1–V19. The tract at residues M1–S21 is disordered. The 237-residue stretch at A152 to A388 folds into the Methyl-accepting transducer domain.

This sequence belongs to the methyl-accepting chemotaxis (MCP) protein family. Post-translationally, methylated by CheR.

It localises to the cytoplasm. In terms of biological role, potentially involved in chemo- or phototactic signal transduction. The sequence is that of Transducer protein Htr13 (htr13) from Halobacterium salinarum (strain ATCC 29341 / DSM 671 / R1).